The sequence spans 318 residues: Trans-prenyltransferase (318 aa).

The helical transmembrane segment at 1 to 21 threads the bilayer; that stretch reads MLHLIYISIIVVLIIILISYT. Isopentenyl diphosphate is bound by residues K85, R88, and H122. Residues D129 and D135 each coordinate Mg(2+). R140 is a dimethylallyl diphosphate binding site. R141 is a binding site for isopentenyl diphosphate. Residues K216, T217, and Q254 each contribute to the dimethylallyl diphosphate site.

Belongs to the FPP/GGPP synthase family. Asfivirus trans-prenyltransferase subfamily. Mg(2+) serves as cofactor.

It localises to the host endoplasmic reticulum. Its subcellular location is the host membrane. It catalyses the reaction isopentenyl diphosphate + dimethylallyl diphosphate = (2E)-geranyl diphosphate + diphosphate. The enzyme catalyses isopentenyl diphosphate + (2E)-geranyl diphosphate = (2E,6E)-farnesyl diphosphate + diphosphate. It carries out the reaction isopentenyl diphosphate + (2E,6E)-farnesyl diphosphate = (2E,6E,10E)-geranylgeranyl diphosphate + diphosphate. The catalysed reaction is isopentenyl diphosphate + (2E,6E,10E)-geranylgeranyl diphosphate = (2E,6E,10E,14E)-geranylfarnesyl diphosphate + diphosphate. Its pathway is isoprenoid biosynthesis; farnesyl diphosphate biosynthesis; farnesyl diphosphate from geranyl diphosphate and isopentenyl diphosphate: step 1/1. The protein operates within isoprenoid biosynthesis; geranyl diphosphate biosynthesis; geranyl diphosphate from dimethylallyl diphosphate and isopentenyl diphosphate: step 1/1. It functions in the pathway isoprenoid biosynthesis; geranylgeranyl diphosphate biosynthesis; geranylgeranyl diphosphate from farnesyl diphosphate and isopentenyl diphosphate: step 1/1. Functionally, trans-prenyltransferase that catalyzes the sequential condensation of isopentenyl diphosphate (IPP) with different allylic diphosphates, such as dimethylallyl diphosphate (DMAPP), geranyl diphosphate (GPP), farnesyl diphosphate (FPP) and geranylgeranyl diphosphate (GGPP), farnesyl diphosphate being the best allylic substrate. This is Trans-prenyltransferase from African swine fever virus (isolate Tick/Malawi/Lil 20-1/1983) (ASFV).